Reading from the N-terminus, the 259-residue chain is Borneol dehydrogenase, mitochondrial (259 aa).

A mitochondrion-targeting transit peptide spans 1–30; the sequence is MASTVLRRLEGKVALITGAASGIGESAARL. Residues 21–23, Asp42, 63–64, and 90–92 each bind NAD(+); these read SGI, DV, and NAG. Residue Ser144 is the Proton donor of the active site. Residues Ser144 and Tyr157 each coordinate substrate. NAD(+)-binding residues include Tyr157, Lys161, and Thr192. The active-site Proton acceptor is Tyr157. Lys161 acts as the Proton donor/acceptor in catalysis.

It belongs to the short-chain dehydrogenases/reductases (SDR) family. In terms of tissue distribution, specifically expressed in glandular trichomes of mature flowers.

The protein resides in the mitochondrion. It carries out the reaction borneol + NAD(+) = camphor + NADH + H(+). Its pathway is secondary metabolite biosynthesis; terpenoid biosynthesis. Functionally, involved in the biosynthesis of monoterpenes natural products related to camphor. Catalyzes the conversion of borneol into camphor. This Lavandula x intermedia (Lavandin) protein is Borneol dehydrogenase, mitochondrial.